The following is a 308-amino-acid chain: Adipolin (308 aa).

The signal sequence occupies residues 1–21 (MWAWGWAAAALLWLQTAGAGA). The interval 36–119 (DSPNITTSNR…PPGSPGVGVT (84 aa)) is disordered. A glycan (N-linked (GlcNAc...) asparagine) is linked at Asn39. Positions 82–93 (RKRCRGRDKKSR) are enriched in basic residues. Residues 99–113 (PGPPGPPGPPGPPGS) show a composition bias toward pro residues. Residues 153-308 (QRLVVEAFYC…SSFSGMLLGT (156 aa)) enclose the C1q domain.

This sequence belongs to the adipolin/erythroferrone family. In terms of assembly, homomultimer; disulfide-linked. Adipolin fC1QTNF12: homotrimer; disulfide-linked. Adipolin gC1QTNF12: homodimer; disulfide-linked. May interact with ERFE. Processed into Adipolin fC1QTNF12 and Adipolin gC1QTNF12 by FURIN. Insulin enhances endogenous C1QTNF12 cleavage. In terms of tissue distribution, widely expressed, with high expression in subcutaneous and epididymal white adipose tissues and brown adipose tissue. Expressed in adipocytes (at protein level).

The protein localises to the secreted. In terms of biological role, insulin-sensitizing adipocyte-secreted protein (adipokine) that regulates glucose metabolism in liver and adipose tissue. Promotes glucose uptake in adipocytes and suppresses de novo glucose production in hepatocytes via the PI3K-Akt signaling pathway. Administration lead to reduction of blood glucose. Able to attenuate inflammation in fat tissue. Acts by activating the Akt signaling in hepatocytes and adipocytes. Not able to increase insulin-stimulated glucose uptake in adipocytes. Its function is as follows. Acts by activating the MAP kinase. Increases insulin-stimulated glucose uptake in adipocytes. The polypeptide is Adipolin (C1qtnf12) (Mus musculus (Mouse)).